The sequence spans 520 residues: Cytochrome P450 monooxygenase 98 (520 aa).

A helical membrane pass occupies residues 7-27; it reads MLNNNLLIVIGTFAVCVYIVL. Cys-445 is a heme binding site.

It belongs to the cytochrome P450 family. Requires heme as cofactor.

It localises to the membrane. Its pathway is secondary metabolite biosynthesis. Cytochrome P450 monooxygenase that is able to use pyrene, phenanthrene, 3,5-dimethoxy-trans-stilbene and 3,5,4'-trimethoxy-trans-stilbene as substrates for oxidation. The protein is Cytochrome P450 monooxygenase 98 of Postia placenta (strain ATCC 44394 / Madison 698-R) (Brown rot fungus).